An 89-amino-acid chain; its full sequence is UPF0223 protein BCE_4008 (89 aa).

This sequence belongs to the UPF0223 family.

In Bacillus cereus (strain ATCC 10987 / NRS 248), this protein is UPF0223 protein BCE_4008.